Here is a 105-residue protein sequence, read N- to C-terminus: Thiosulfate sulfurtransferase GlpE (105 aa).

The Rhodanese domain occupies 15 to 103 (MQQGAILVDI…WCRAELPIDT (89 aa)). Cys-63 acts as the Cysteine persulfide intermediate in catalysis.

The protein belongs to the GlpE family.

The protein resides in the cytoplasm. It carries out the reaction thiosulfate + hydrogen cyanide = thiocyanate + sulfite + 2 H(+). The catalysed reaction is thiosulfate + [thioredoxin]-dithiol = [thioredoxin]-disulfide + hydrogen sulfide + sulfite + 2 H(+). Functionally, transferase that catalyzes the transfer of sulfur from thiosulfate to thiophilic acceptors such as cyanide or dithiols. May function in a CysM-independent thiosulfate assimilation pathway by catalyzing the conversion of thiosulfate to sulfite, which can then be used for L-cysteine biosynthesis. The sequence is that of Thiosulfate sulfurtransferase GlpE from Haemophilus influenzae (strain PittEE).